A 251-amino-acid polypeptide reads, in one-letter code: HTH-type transcriptional regulator UlaR (251 aa).

An HTH deoR-type domain is found at 3–58; it reads EAQRHQILLEMLAQLGFVTVEKVVERLGISPATARRDINKLDERGKLKKVRNGAEA. The H-T-H motif DNA-binding region spans 20–39; that stretch reads VTVEKVVERLGISPATARRD.

The protein resides in the cytoplasm. Its function is as follows. Represses ulaG and the ulaABCDEF operon. The polypeptide is HTH-type transcriptional regulator UlaR (Shigella sonnei (strain Ss046)).